We begin with the raw amino-acid sequence, 231 residues long: MKKRTFAVDIDGTITENGGGRIHLDALESLRRLVNMGHDVIFVTGRSSVEGFLLSVFGGTTKVSVGENGGCITLDSNDHILLGNLEECKNALNILKNNMENVEEKYVFPRMTEVVLQRTFDLDQARKILSENNIDVVLSDSQYAYHINSPGIDKGTGFTEIMKKFSISRDDVIAIGDSATDVPLFKVAKTSVALGNASDDVKSEATMTVSAHAGDGVLEALDKLAPILSEI.

D9 serves as the catalytic Nucleophile. D9 and D11 together coordinate Mg(2+). K154 provides a ligand contact to substrate. 2 residues coordinate Mg(2+): D177 and D181.

It belongs to the archaeal SPP-like hydrolase family. The cofactor is Mg(2+).

The enzyme catalyses 2-phosphoglycolate + H2O = glycolate + phosphate. Its function is as follows. Catalyzes the dephosphorylation of 2-phosphoglycolate. The polypeptide is Phosphoglycolate phosphatase (Nitrosopumilus maritimus (strain SCM1)).